Consider the following 419-residue polypeptide: Peptide chain release factor subunit 1 (419 aa).

The protein belongs to the eukaryotic release factor 1 family. In terms of assembly, heterodimer of two subunits, one of which binds GTP.

The protein localises to the cytoplasm. Functionally, directs the termination of nascent peptide synthesis (translation) in response to the termination codons UAA, UAG and UGA. In Methanococcus vannielii (strain ATCC 35089 / DSM 1224 / JCM 13029 / OCM 148 / SB), this protein is Peptide chain release factor subunit 1.